A 119-amino-acid chain; its full sequence is Protein yippee-like 3 (119 aa).

The region spanning 19–116 is the Yippee domain; sequence RRYSCAHCRA…IELNHMIKDN (98 aa). Cys23, Cys26, Cys79, and Cys82 together coordinate Zn(2+).

Belongs to the yippee family. In terms of processing, probably ubiquitinated leading to its degradation by the proteasome.

It is found in the nucleus. Its subcellular location is the nucleolus. Functionally, involved in proliferation and apoptosis in myeloid precursor cells. The protein is Protein yippee-like 3 (YPEL3) of Bos taurus (Bovine).